A 433-amino-acid chain; its full sequence is 3-phosphoshikimate 1-carboxyvinyltransferase (433 aa).

3-phosphoshikimate is bound by residues lysine 22, serine 23, and arginine 27. Phosphoenolpyruvate is bound at residue lysine 22. Residues glycine 95 and arginine 123 each coordinate phosphoenolpyruvate. 3-phosphoshikimate is bound by residues serine 166, glutamine 168, aspartate 314, and lysine 341. Glutamine 168 is a phosphoenolpyruvate binding site. Residue aspartate 314 is the Proton acceptor of the active site. Phosphoenolpyruvate-binding residues include arginine 345 and arginine 386.

It belongs to the EPSP synthase family. As to quaternary structure, monomer.

The protein resides in the cytoplasm. The catalysed reaction is 3-phosphoshikimate + phosphoenolpyruvate = 5-O-(1-carboxyvinyl)-3-phosphoshikimate + phosphate. It participates in metabolic intermediate biosynthesis; chorismate biosynthesis; chorismate from D-erythrose 4-phosphate and phosphoenolpyruvate: step 6/7. Its function is as follows. Catalyzes the transfer of the enolpyruvyl moiety of phosphoenolpyruvate (PEP) to the 5-hydroxyl of shikimate-3-phosphate (S3P) to produce enolpyruvyl shikimate-3-phosphate and inorganic phosphate. In Acidithiobacillus ferrooxidans (strain ATCC 23270 / DSM 14882 / CIP 104768 / NCIMB 8455) (Ferrobacillus ferrooxidans (strain ATCC 23270)), this protein is 3-phosphoshikimate 1-carboxyvinyltransferase.